A 316-amino-acid polypeptide reads, in one-letter code: Acetyl-coenzyme A carboxylase carboxyl transferase subunit beta (316 aa).

One can recognise a CoA carboxyltransferase N-terminal domain in the interval 39-308; sequence LWHKCSKCGV…TPPMVLWETM (270 aa). C43, C46, C62, and C65 together coordinate Zn(2+). The C4-type zinc finger occupies 43–65; that stretch reads CSKCGVLTYTKDLRANQMVCVEC.

It belongs to the AccD/PCCB family. In terms of assembly, acetyl-CoA carboxylase is a heterohexamer composed of biotin carboxyl carrier protein (AccB), biotin carboxylase (AccC) and two subunits each of ACCase subunit alpha (AccA) and ACCase subunit beta (AccD). Zn(2+) is required as a cofactor.

Its subcellular location is the cytoplasm. The catalysed reaction is N(6)-carboxybiotinyl-L-lysyl-[protein] + acetyl-CoA = N(6)-biotinyl-L-lysyl-[protein] + malonyl-CoA. The protein operates within lipid metabolism; malonyl-CoA biosynthesis; malonyl-CoA from acetyl-CoA: step 1/1. Functionally, component of the acetyl coenzyme A carboxylase (ACC) complex. Biotin carboxylase (BC) catalyzes the carboxylation of biotin on its carrier protein (BCCP) and then the CO(2) group is transferred by the transcarboxylase to acetyl-CoA to form malonyl-CoA. This chain is Acetyl-coenzyme A carboxylase carboxyl transferase subunit beta, found in Nostoc sp. (strain PCC 7120 / SAG 25.82 / UTEX 2576).